We begin with the raw amino-acid sequence, 362 residues long: Endopolygalacturonase II (362 aa).

Positions 1–21 (MHSFASLLAYGLVAGATFASA) are cleaved as a signal peptide. Residues 22–27 (SPIEAR) constitute a propeptide that is removed on maturation. Cysteines 30 and 45 form a disulfide. Residues 156–186 (ANDITFTDVTINNADGDTQGGHNTDAFDVGN) form a PbH1 1 repeat. Asp-201 (proton donor) is an active-site residue. Cysteines 203 and 219 form a disulfide. PbH1 repeat units lie at residues 209–229 (GENI…SIGS), 238–259 (VKNV…RIKT), 267–289 (VSEI…VIQQ), and 301–322 (TNGV…DSGA). Residue His-223 is part of the active site. Asn-240 carries N-linked (GlcNAc...) (high mannose) asparagine glycosylation. Cystine bridges form between Cys-329–Cys-334 and Cys-353–Cys-362.

It belongs to the glycosyl hydrolase 28 family.

It localises to the secreted. The catalysed reaction is (1,4-alpha-D-galacturonosyl)n+m + H2O = (1,4-alpha-D-galacturonosyl)n + (1,4-alpha-D-galacturonosyl)m.. In terms of biological role, involved in maceration and soft-rotting of plant tissue. Hydrolyzes the 1,4-alpha glycosidic bonds of de-esterified pectate in the smooth region of the plant cell wall. This is Endopolygalacturonase II (pgaII) from Aspergillus niger (strain ATCC 1015 / CBS 113.46 / FGSC A1144 / LSHB Ac4 / NCTC 3858a / NRRL 328 / USDA 3528.7).